The following is a 245-amino-acid chain: 1-(5-phosphoribosyl)-5-[(5-phosphoribosylamino)methylideneamino] imidazole-4-carboxamide isomerase (245 aa).

Residue Asp-8 is the Proton acceptor of the active site. Catalysis depends on Asp-129, which acts as the Proton donor.

The protein belongs to the HisA/HisF family.

Its subcellular location is the cytoplasm. The enzyme catalyses 1-(5-phospho-beta-D-ribosyl)-5-[(5-phospho-beta-D-ribosylamino)methylideneamino]imidazole-4-carboxamide = 5-[(5-phospho-1-deoxy-D-ribulos-1-ylimino)methylamino]-1-(5-phospho-beta-D-ribosyl)imidazole-4-carboxamide. Its pathway is amino-acid biosynthesis; L-histidine biosynthesis; L-histidine from 5-phospho-alpha-D-ribose 1-diphosphate: step 4/9. The protein is 1-(5-phosphoribosyl)-5-[(5-phosphoribosylamino)methylideneamino] imidazole-4-carboxamide isomerase of Geotalea daltonii (strain DSM 22248 / JCM 15807 / FRC-32) (Geobacter daltonii).